The chain runs to 322 residues: CMP-sialic acid transporter 1 (322 aa).

Residues 1-2 (MQ) are Cytoplasmic-facing. Residues 3 to 23 (WYLVAALLTVLTSSQGILTTL) form a helical membrane-spanning segment. The Lumenal segment spans residues 24-33 (SQSNGKYKYD). Residues 34-54 (YATIPFLAELFKLSFSSFFLW) traverse the membrane as a helical segment. Topologically, residues 55-75 (KECQSSSPPRMTKEWRSIRLY) are cytoplasmic. Residues 76–96 (LVPSVIYLIHNNVQFATLTYV) form a helical membrane-spanning segment. Topologically, residues 97 to 100 (DPST) are lumenal. Residues 101–120 (YQIMGNLKIVTTGILFRLVL) traverse the membrane as a helical segment. Topologically, residues 121-126 (KRKLSN) are cytoplasmic. The chain crosses the membrane as a helical span at residues 127–144 (LQWMAVVLLAVGTTTSQV). At 145 to 157 (KGCGDAPCDSLFS) the chain is on the lumenal side. Residues 158 to 178 (APFQGYMLGILSACLSALAGV) traverse the membrane as a helical segment. The Cytoplasmic portion of the chain corresponds to 179–198 (YTEYLMKKNNDSLYWQNVQL). The chain crosses the membrane as a helical span at residues 199-219 (YTFGVIFNMGWLIYGDFKAGF). Residues 220 to 233 (ERGPWWQRLFNGYS) are Lumenal-facing. A helical membrane pass occupies residues 234 to 254 (ITTWMVVFNLGSTGLLVSWLM). Residues 255–262 (KYSDNIVK) are Cytoplasmic-facing. A helical membrane pass occupies residues 263-283 (VYSTSMGMLLTMVLSVYLFNV). At 284–286 (RAT) the chain is on the lumenal side.

The protein belongs to the nucleotide-sugar transporter family. CMP-Sialate:CMP antiporter (TC 2.A.7.12) subfamily.

The protein resides in the golgi apparatus membrane. Its function is as follows. Sugar transporter involved in the transport of CMP-sialic acid from the cytoplasm into the Golgi. May transport important nucleotide sugars such as CMP-Kdo (2-keto-3-deoxy-D-manno-octulosonic acid) in physiological conditions. In Oryza sativa subsp. indica (Rice), this protein is CMP-sialic acid transporter 1.